The primary structure comprises 1121 residues: Phosphatidylinositol 4-kinase beta 1 (1121 aa).

The region spanning 1–143 is the PIK helical domain; sequence MPMGRFLSLV…SRIQEKCQIA (143 aa). Positions 187–207 are enriched in polar residues; that stretch reads PPTQKSLSFSPSPGTNVQDDG. Positions 187 to 210 are disordered; that stretch reads PPTQKSLSFSPSPGTNVQDDGSQL. 9 consecutive repeat copies span residues 212 to 231, 244 to 263, 266 to 285, 288 to 306, 309 to 328, 331 to 350, 353 to 372, 380 to 398, and 420 to 438. The 11 X 20 AA approximate repeats (PPC) stretch occupies residues 212–508; the sequence is AEDNKIFKKL…FRDRDQSVED (297 aa). Disordered stretches follow at residues 343 to 421, 435 to 489, 506 to 544, and 794 to 825; these read ESKN…EEDE, DDKK…ESSP, VEDS…NTAS, and AAAA…NGGM. Composition is skewed to basic and acidic residues over residues 358–376, 383–405, 412–421, and 435–445; these read FFKK…VPKE, DGFL…EKNE, ADKKSGEEDE, and DDKKDIVKVDD. Positions 446–455 are enriched in acidic residues; sequence GNESEGDESP. Serine 449 and serine 454 each carry phosphoserine. 2 tandem repeats follow at residues 454–472 and 489–508. Residues 466-475 show a composition bias toward basic and acidic residues; that stretch reads IHPEDAKPTS. The segment covering 476–489 has biased composition (polar residues); the sequence is ENENSSNGLVESSP. The region spanning 835–1106 is the PI3K/PI4K catalytic domain; the sequence is ELWEGKRDRI…LISSSLDAWR (272 aa). The segment at 841-847 is G-loop; sequence RDRIRKA. The tract at residues 969-977 is catalytic loop; sequence QVKDRHNGN. An activation loop region spans residues 988–1012; sequence HIDFGFMLSNSPGGVNFESAPFKLT.

The protein belongs to the PI3/PI4-kinase family. Type III PI4K subfamily. Interacts with AHK2, CBL1 and RABA4D. As to expression, expressed constitutively in leaves, roots, flowers, and stems.

It localises to the cell membrane. It is found in the golgi apparatus. The protein localises to the trans-Golgi network. Its subcellular location is the cytoplasmic vesicle membrane. The enzyme catalyses a 1,2-diacyl-sn-glycero-3-phospho-(1D-myo-inositol) + ATP = a 1,2-diacyl-sn-glycero-3-phospho-(1D-myo-inositol 4-phosphate) + ADP + H(+). Its activity is regulated as follows. Stimulated by phosphatidylinositol 4-phosphate (PtdIns4P). Slightly repressed by phosphatidyl-choline (PtdCho), wortmannin and adenosine. In terms of biological role, acts on phosphatidylinositol (PtdIns) in the first committed step in the production of the second messenger inositol-1,4,5-trisphosphate. Necessary for proper organization of the trans-Golgi network (TGN) and post-Golgi secretion in root hairs. Together with PI4KB2, required during polarized root hair expansion and pollen tube elongation. Functions redundantly with PI4KB2 upstream of the cold response phosphoinositide-dependent phospholipase C (PI-PLC) pathway. In Arabidopsis thaliana (Mouse-ear cress), this protein is Phosphatidylinositol 4-kinase beta 1.